Consider the following 170-residue polypeptide: Flavin reductase (170 aa).

NAD(+) is bound by residues Ser51, His138, and 159–162 (FYRG).

It belongs to the non-flavoprotein flavin reductase family. In terms of assembly, homodimer. Likely forms a loose transient complex with monooxygenases for which it provides FMNH(2).

The enzyme catalyses FMNH2 + NAD(+) = FMN + NADH + 2 H(+). It carries out the reaction FADH2 + NAD(+) = FAD + NADH + 2 H(+). In terms of biological role, catalyzes the reduction of FMN, and to a lesser extent, FAD, using NADH as an electron donor. Is able to provide the FMNH(2) required for the Baeyer-Villiger oxidations catalyzed by 2,5-diketocamphane monooxygenases and 3,6-diketocamphane monooxygenase. NADPH acts as a very poor cosubstrate. The chain is Flavin reductase from Pseudomonas putida (Arthrobacter siderocapsulatus).